A 621-amino-acid chain; its full sequence is 1-deoxy-D-xylulose-5-phosphate synthase (621 aa).

Residues H80 and 121–123 (GHS) each bind thiamine diphosphate. D152 serves as a coordination point for Mg(2+). Residues 153-154 (GA), N181, Y288, and E370 contribute to the thiamine diphosphate site. A Mg(2+)-binding site is contributed by N181.

The protein belongs to the transketolase family. DXPS subfamily. In terms of assembly, homodimer. Requires Mg(2+) as cofactor. The cofactor is thiamine diphosphate.

The catalysed reaction is D-glyceraldehyde 3-phosphate + pyruvate + H(+) = 1-deoxy-D-xylulose 5-phosphate + CO2. The protein operates within metabolic intermediate biosynthesis; 1-deoxy-D-xylulose 5-phosphate biosynthesis; 1-deoxy-D-xylulose 5-phosphate from D-glyceraldehyde 3-phosphate and pyruvate: step 1/1. In terms of biological role, catalyzes the acyloin condensation reaction between C atoms 2 and 3 of pyruvate and glyceraldehyde 3-phosphate to yield 1-deoxy-D-xylulose-5-phosphate (DXP). The protein is 1-deoxy-D-xylulose-5-phosphate synthase of Edwardsiella ictaluri (strain 93-146).